We begin with the raw amino-acid sequence, 235 residues long: REF/SRPP-like protein At2g47780 (235 aa).

Residues 1–12 (MAEDEIVVEEEQ) are compositionally biased toward acidic residues. The segment at 1 to 32 (MAEDEIVVEEEQSQPQEITPVPPSSSSSPSLV) is disordered.

This sequence belongs to the REF/SRPP family.

This chain is REF/SRPP-like protein At2g47780, found in Arabidopsis thaliana (Mouse-ear cress).